The chain runs to 341 residues: Casein kinase I isoform alpha (341 aa).

Residues 16–284 (YKLIRKIGSG…YLRQLFRILF (269 aa)) form the Protein kinase domain. Residues 22–30 (IGSGSFGDI) and lysine 45 each bind ATP. The active-site Proton acceptor is aspartate 135. Polar residues predominate over residues 306 to 320 (QSQSSGVPGTNTTTQ). Residues 306 to 341 (QSQSSGVPGTNTTTQGATVPSAGVPAGVAPGGTTPQ) are disordered. Low complexity predominate over residues 321–341 (GATVPSAGVPAGVAPGGTTPQ).

It belongs to the protein kinase superfamily. CK1 Ser/Thr protein kinase family. Casein kinase I subfamily.

The catalysed reaction is L-seryl-[protein] + ATP = O-phospho-L-seryl-[protein] + ADP + H(+). It carries out the reaction L-threonyl-[protein] + ATP = O-phospho-L-threonyl-[protein] + ADP + H(+). This Caenorhabditis elegans protein is Casein kinase I isoform alpha (kin-19).